Consider the following 628-residue polypeptide: MSTETLQKETLGFQAEVKQLLQLMIHSLYSNKEIVLRELISNASDAADKLRFEALADNSLYGNDSDLKIRVSFDKQARTITISDNGIGMSREEVINNIGTIAKSGTKEFLQSLTGDQAKDANLIGQFGVGFYSAFIIADKVTLTTRRAGSNEAVRWESTGEGDYTLEPAEKESRGTDIVLHLREGEDEFLNDWKLKSIIRKYSDHITLPIVMKKSEWKDGEQVPTDEDETVNKASALWARNKSDISEQEYQEFYKHVSHDFENPLTWSHNRVEGKQEYISLLYIPSKAPFDLYDRERQHGIKLYVKRVFIMDDAEQLMPQYLRFVRGVIDSADLPLNVSREILQHSKDIEAIKTASVKRVLSMLEDLAENKPEEYAKFWKEFGRVLKEGPGEDFANKERIAGLLRFASTHADTDEQVVSFKDYIARMKEGQEAIYYITADSFAAAKHSPHLEIFRKKGIEVLLLSDRVDEWLVSSLTEFDGKKLQSVAKGDLDLGKLEDEAEKEQQKKTEDEYKPLVERIQAALGDSVKEVRVTHRLTDSPACLVAGEHDLSGNLERLLKAAGQKTPGSKPILEINPDHGIVQRLKDVTDEAKFADWAHLLFDQALLAEGGQLEDPAAFVRRVNAMLA.

Residues 1–340 are a; substrate-binding; that stretch reads MSTETLQKET…SADLPLNVSR (340 aa). A b region spans residues 341-557; it reads EILQHSKDIE…EHDLSGNLER (217 aa). Residues 558-628 form a c region; the sequence is LLKAAGQKTP…FVRRVNAMLA (71 aa).

It belongs to the heat shock protein 90 family. In terms of assembly, homodimer.

The protein localises to the cytoplasm. Functionally, molecular chaperone. Has ATPase activity. The protein is Chaperone protein HtpG of Methylobacillus flagellatus (strain ATCC 51484 / DSM 6875 / VKM B-1610 / KT).